Reading from the N-terminus, the 758-residue chain is Glucan endo-1,3-beta-D-glucosidase (758 aa).

The tat-type signal signal peptide spans 1-34 (MSHASRRRWRRATTSAATAALLCGALLTFPSAPA). Residues 38–251 (VRLGSGSYTT…SGYASVALLP (214 aa)) are beta-sandwich subdomain. The 667-residue stretch at 38 to 704 (VRLGSGSYTT…QWLSTLAEFG (667 aa)) folds into the GH81 domain. The segment at 252–342 (SPDDFDRYAP…EGDRFTTELT (91 aa)) is alpha/beta subdomain. The interval 352-704 (TVDSADHQRL…QWLSTLAEFG (353 aa)) is (alpha/beta)6 barrel subdomain. (1,3-beta-D-glucosyl)n is bound by residues Y382, K386, D457, H461, N532, E534, and E538. The active site involves D457. Active-site residues include E534 and E538.

This sequence belongs to the glycosyl hydrolase 81 family. Predicted to be exported by the Tat system. The position of the signal peptide cleavage has not been experimentally proven.

The protein localises to the secreted. The enzyme catalyses Hydrolysis of (1-&gt;3)-beta-D-glucosidic linkages in (1-&gt;3)-beta-D-glucans.. Cleaves internal linkages in 1,3-beta-glucan. May contribute to biomass degradation by hydrolyzing the 1,3-beta-linked plant polymer callose that is present in decomposing plant tissue. This chain is Glucan endo-1,3-beta-D-glucosidase, found in Thermobifida fusca (strain YX).